The chain runs to 448 residues: F-box/FBD/LRR-repeat protein At2g04230 (448 aa).

An F-box domain is found at 12–64 (EDRISDLPDALLLQILSSLPTENAIATSVLSKRWRSLWTMLPKLKFDSNFNPV). LRR repeat units follow at residues 72 to 98 (PTMF…HLSF), 149 to 176 (ILKL…YLDQ), 177 to 202 (VHFK…VVHR), 204 to 225 (SNAD…TIED), 226 to 251 (LRQE…NING), 271 to 296 (ISNV…ILHL), and 319 to 345 (THER…KLTD). The 52-residue stretch at 359–410 (KWNPPKCAPECLLFHLETFLWIGYEWQRGDEKEVATYILENARRLKKATFST) folds into the FBD domain.

This is F-box/FBD/LRR-repeat protein At2g04230 from Arabidopsis thaliana (Mouse-ear cress).